Reading from the N-terminus, the 207-residue chain is Outer-membrane lipoprotein carrier protein (207 aa).

The N-terminal stretch at 1–21 (MRLFRVLLLSAVAFALSPAQA) is a signal peptide.

It belongs to the LolA family. In terms of assembly, monomer.

The protein resides in the periplasm. Participates in the translocation of lipoproteins from the inner membrane to the outer membrane. Only forms a complex with a lipoprotein if the residue after the N-terminal Cys is not an aspartate (The Asp acts as a targeting signal to indicate that the lipoprotein should stay in the inner membrane). This chain is Outer-membrane lipoprotein carrier protein, found in Azotobacter vinelandii (strain DJ / ATCC BAA-1303).